Here is a 419-residue protein sequence, read N- to C-terminus: MTTQLEQAWELAKQRFAAVGIDVEEALRQLDRLPVSMHCWQGDDVSGFENPEGSLTGGIQATGNYPGKARNGSELRADLEQAMRLIPGPKRLNLHAIYLESDTPVARDQIKPEHFKNWVEWAKANQLGLDFNPSCFSHPLSADGFTLSHADDSIRQFWIDHCKASRRVSAYFGEQLGTPSVMNIWIPDGMKDITVDRLAPRQRLLAALDEVISEKLDPAHHIDAVESKLFGIGAESYTVGSNEFYMGYATSRQTALCLDAGHFHPTEVISDKISAAMLYVPQLLLHVSRPVRWDSDHVVLLDDETQAIASEIVRHDLFDRVHIGLDFFDASINRIAAWVIGTRNMKKALLRALLEPTAELRKLEAAGDYSARLALLEEQKSLPWQAVWEMYCQRHDTPAGSEWLESVRAYEKEILSQRG.

His-262, Asp-294, and Asp-296 together coordinate Mn(2+).

This sequence belongs to the rhamnose isomerase family. As to quaternary structure, homotetramer. Requires Mn(2+) as cofactor.

It localises to the cytoplasm. The catalysed reaction is L-rhamnopyranose = L-rhamnulose. The protein operates within carbohydrate degradation; L-rhamnose degradation; glycerone phosphate from L-rhamnose: step 1/3. Its function is as follows. Catalyzes the interconversion of L-rhamnose and L-rhamnulose. This chain is L-rhamnose isomerase, found in Escherichia coli O17:K52:H18 (strain UMN026 / ExPEC).